Reading from the N-terminus, the 658-residue chain is DNA mismatch repair protein MutL (658 aa).

Positions 114 to 130 are enriched in basic and acidic residues; sequence RQEDSSHATQVKAEDGK. Residues 114-137 form a disordered region; the sequence is RQEDSSHATQVKAEDGKLSSPTAA.

This sequence belongs to the DNA mismatch repair MutL/HexB family.

Its function is as follows. This protein is involved in the repair of mismatches in DNA. It is required for dam-dependent methyl-directed DNA mismatch repair. May act as a 'molecular matchmaker', a protein that promotes the formation of a stable complex between two or more DNA-binding proteins in an ATP-dependent manner without itself being part of a final effector complex. The polypeptide is DNA mismatch repair protein MutL (Neisseria meningitidis serogroup C / serotype 2a (strain ATCC 700532 / DSM 15464 / FAM18)).